The primary structure comprises 336 residues: Myb family transcription factor PHL8 (336 aa).

The HTH myb-type domain maps to 31–91 (TDAKPRLKWT…HLQKYRLGKS (61 aa)). The H-T-H motif DNA-binding region spans 62–87 (PKGLMKVMEIPGLTLYHLKSHLQKYR). Residues 100–134 (EVSSASENQEVESKNDSRDLRGCSVTEENSNPAKE) are disordered. Residues 110-120 (VESKNDSRDLR) are compositionally biased toward basic and acidic residues. The stretch at 139–159 (TEALQMQMEVQKKLHEQIEVQ) forms a coiled coil. The short motif at 152–157 (LHEQIE) is the LHEQLE element.

This sequence belongs to the MYB-CC family.

It localises to the nucleus. This chain is Myb family transcription factor PHL8, found in Arabidopsis thaliana (Mouse-ear cress).